A 227-amino-acid chain; its full sequence is MVSASSLLLAASAIAGVFSAPAAAPVSENLNVLQERALTSSATGTSGGYYYSFWTDGSGGVTYSNGANGQYAVSWTGNKGNFVGGKGWAVGSERSISYTGSYKPNGNSYLSVYGWTTSPLIEYYIVEDFGTYDPSSAATEIGSVTSDGSTYKILETTRTNQPSVQGTATFKQYWSVRTSKRTSGTVTTANHFAAWKKLGLTLGSTYNYQIVAVEGYQSSGSASITVS.

A signal peptide spans 1–36 (MVSASSLLLAASAIAGVFSAPAAAPVSENLNVLQER). Residues 37–227 (ALTSSATGTS…SSGSASITVS (191 aa)) form the GH11 domain. The necrosis inducing domain stretch occupies residues 112–136 (VYGWTTSPLIEYYIVEDFGTYDPSS). The Nucleophile role is filled by Glu122. The Proton donor role is filled by Glu214.

Belongs to the glycosyl hydrolase 11 (cellulase G) family.

The protein resides in the secreted. It catalyses the reaction Endohydrolysis of (1-&gt;4)-beta-D-xylosidic linkages in xylans.. The protein operates within glycan degradation; xylan degradation. With respect to regulation, significantly inhibited by the wheat xylanase inhibiting protein I (XIP-I) and the proteinaceous endoxylanase Triticum aestivum xylanase inhibitors I (TAXI-I), whereas no inhibition is detected with TAXI-II. Endo-1,4-beta-xylanase involved in the hydrolysis of xylan, a major structural heterogeneous polysaccharide found in plant biomass representing the second most abundant polysaccharide in the biosphere, after cellulose. Required for plant infection and the appearance of secondary lesions. Is able to induce necrosis on leaves, seedling growth inhibition, induction of a ROS burst, electrolyte leakage, cytoplasm shrinkage, autofluorescence, cell death, and induction of defense genes, and this abilities are independent of the catalytic activity. Only exhibits elicitor activity in certain plants such as tomato, but not in N.benthamiana. The polypeptide is Endo-1,4-beta-xylanase 11A (Botryotinia fuckeliana (strain B05.10) (Noble rot fungus)).